The sequence spans 115 residues: T cell receptor delta variable 1 (115 aa).

An N-terminal signal peptide occupies residues 1–21 (MLFSSLLCVFVAFSYSGSSVA). In terms of domain architecture, Ig-like spans 22–115 (QKVTQAQSSV…SAKYFCALGE (94 aa)). Cys-43 and Cys-111 are disulfide-bonded.

In terms of assembly, gamma-delta TR is a heterodimer composed of a gamma and delta chain; disulfide-linked. The gamma-delta TR is associated with the transmembrane signaling CD3 coreceptor proteins following the stoichiometry: a single gamma-delta TR heterodimer associates with one CD3D-CD3E heterodimer, one CD3G-CD3E heterodimer and one CD247 homodimer forming a stable octameric structure. Upon activation, gamma-delta TR complex associates with FCER1G to initiate intracellular signaling.

The protein localises to the cell membrane. Its function is as follows. V region of the variable domain of T cell receptor (TR) delta chain that participates in the antigen recognition. Gamma-delta TRs recognize a variety of self and foreign non-peptide antigens frequently expressed at the epithelial boundaries between the host and external environment, including endogenous lipids presented by MH-like protein CD1D and phosphoantigens presented by butyrophilin-like molecule BTN3A1. Upon antigen recognition induces rapid, innate-like immune responses involved in pathogen clearance and tissue repair. Binding of gamma-delta TR complex to antigen triggers phosphorylation of immunoreceptor tyrosine-based activation motifs (ITAMs) in the CD3 chains by the LCK and FYN kinases, allowing the recruitment, phosphorylation, and activation of ZAP70 that facilitates phosphorylation of the scaffolding proteins LCP2 and LAT. This lead to the formation of a supramolecular signalosome that recruits the phospholipase PLCG1, resulting in calcium mobilization and ERK activation, ultimately leading to T cell expansion and differentiation into effector cells. Gamma-delta TRs are produced through somatic rearrangement of a limited repertoire of variable (V), diversity (D), and joining (J) genes. The potential diversity of gamma-delta TRs is conferred by the unique ability to rearrange (D) genes in tandem and to utilize all three reading frames. The combinatorial diversity is considerably increased by the sequence exonuclease trimming and random nucleotide (N) region additions which occur during the V-(D)-J rearrangements. This Homo sapiens (Human) protein is T cell receptor delta variable 1.